The primary structure comprises 702 residues: MGRRKIEIKAIKDDRNRSVTFLKRKGGLFKKAHELSVLCSVDVAVFIFGTNKKLYEYSSGDMRELITRYTYHGGATEHKGPSDFNGGDDDDEEEGDGTPPLDQPMDAHMMPPHFQGQGPFPPHVMRHYTPSASPPIPNGVPFPPHGHGVPRGHTPQPQMLSRPGSRNDARRMGQPMGPQGSPQVNGFGFGQQQSMYGPPNTTMPPHMPPQMAPGPPFPYPQHPQHPPHPPHPPHPPHPQQPHQPQMQQQFIEDGRRATMPANFAPHPPPPHGPMGMQRHSVSPPQQHPHHVPQLPPQQPQQHPHSSPPQPQHHQMQSPPQPMVKFESPQQIEPPQHQHQQQPEPQEPRPEQQQQQQQSQQSQQPQEPQSEPARSLPPPPPPLEVKTELAPPAQPGRIPQPSLLDTAVKKLPRQKQHSIFTPIDENRSILSQNLAAFHAEPSKNKSSPPAHHRSSSVDESTSNASEASRGKDKDIASSPPLLKRADPRASISSVSSAPESAPAPPSRSNSLRAGPPRPRLKVQIPDEQSEDGSGSATAESASSAQGGASTDATSQSTRQNDSHSSTNMVLPPPSPSASALLSAGATGPPNPFAPKRPPQHPAPGLNIDTPVSALPSRFLNNEFLPSPSSFYPDWNFRGGDNNTLPSPLNFATPVVGTGPSFLRDENPGASLKRKSPDNLSIHGPISDNPLEAGNEPKRVKVDS.

The MADS-box domain maps to 1–61 (MGRRKIEIKA…KKLYEYSSGD (61 aa)). Disordered stretches follow at residues 73–608 (GGAT…NIDT) and 658–702 (PSFL…KVDS). The span at 86 to 96 (GGDDDDEEEGD) shows a compositional bias: acidic residues. Residues 132–144 (ASPPIPNGVPFPP) are compositionally biased toward pro residues. The segment covering 145–155 (HGHGVPRGHTP) has biased composition (low complexity). Over residues 180 to 195 (GSPQVNGFGFGQQQSM) the composition is skewed to polar residues. The segment covering 201 to 241 (TTMPPHMPPQMAPGPPFPYPQHPQHPPHPPHPPHPPHPQQP) has biased composition (pro residues). Low complexity-rich tracts occupy residues 273–284 (PMGMQRHSVSPP), 326–343 (ESPQ…QQPE), and 350–371 (EQQQ…QSEP). Over residues 456–465 (VDESTSNASE) the composition is skewed to polar residues. Composition is skewed to low complexity over residues 487–512 (RASI…SLRA) and 530–553 (DGSG…DATS). Residues 554-567 (QSTRQNDSHSSTNM) are compositionally biased toward polar residues. The span at 587 to 600 (PPNPFAPKRPPQHP) shows a compositional bias: pro residues. Residues 693 to 702 (NEPKRVKVDS) show a composition bias toward basic and acidic residues.

It belongs to the MEF2 family. In terms of assembly, interacts with MAPK MPS1.

The protein resides in the nucleus. Its function is as follows. Transcription factor acting downstream of the MPS1 MAP kinase (MAPK) cascade during conidiation and plant infection. Required for overcoming plant defense responses and the differentiation of secondary infectious hyphae in live plant cells. This is MADS-box MEF2 type transcription factor MIG1 from Pyricularia oryzae (strain 70-15 / ATCC MYA-4617 / FGSC 8958) (Rice blast fungus).